We begin with the raw amino-acid sequence, 623 residues long: MQSVIAYLKQQEIKPLLRFITCGSVDDGKSTLIGHLLYDSQCLAEDQLADLTVDSQRYGTQGEHIDYALLLDGLAAEREQGITIDVAYRYFDTEKRKFIVADCPGHAQYTRNMATGASSADAAVVLVDARKGLLTQTRRHSYIVALLGIRHVVLAVNKMDLVGYDQQTFEAIASDYLALAAKLGINQVQCIPLSALEGDNLCKRSARMLWYVGPSLLEYLEALEPADVDLAAAMCLPVQWVNRPDSQFRGFTGTLAAGRVRSGDGVVVLPSGCVSRVVRVFNGDTEVHEAVAGQAVTLTLADEIDISRGDVIAATDDPPEVADQVTAYVLWMDDTALLPGRRYWLKLGARMVAASVSDIKHRVDVNTQEQRVAQRLQLNELGYCQLSLDAPVAFVPYARNRVLGSFILIDRQSNATVGAGTLDSGVHCASNVHWQPLDIDHVARARIKGQTPKVLWFTGLSGAGKSAIANIVDKRLHALGYHTFILDGDNVRHGLNRDLSFTVEDRVENIRRVAEVARLMVDAGLVVLVSFISPFRDERQLARERFAADEFVEVFVDVPLAVAEARDVKGLYAKARAGLITDFTGIDSPYEPPQHPELHLRADQGTPEQLASQVLSLLGVEGK.

A sulfate adenylyltransferase region spans residues 1-450 (MQSVIAYLKQ…HVARARIKGQ (450 aa)). The region spanning 14–228 (KPLLRFITCG…YLEALEPADV (215 aa)) is the tr-type G domain. The interval 23–30 (GSVDDGKS) is G1. Residue 23 to 30 (GSVDDGKS) participates in GTP binding. The tract at residues 81 to 85 (GITID) is G2. The interval 102–105 (DCPG) is G3. GTP is bound by residues 102 to 106 (DCPGH) and 157 to 160 (NKMD). Residues 157–160 (NKMD) form a G4 region. The tract at residues 194-196 (SAL) is G5. The adenylyl-sulfate kinase stretch occupies residues 451–623 (TPKVLWFTGL…VLSLLGVEGK (173 aa)). 459–466 (GLSGAGKS) serves as a coordination point for ATP. The active-site Phosphoserine intermediate is Ser533.

It in the C-terminal section; belongs to the APS kinase family. The protein in the N-terminal section; belongs to the TRAFAC class translation factor GTPase superfamily. Classic translation factor GTPase family. CysN/NodQ subfamily. As to quaternary structure, heterodimer composed of CysD, the smaller subunit, and CysNC.

It carries out the reaction sulfate + ATP + H(+) = adenosine 5'-phosphosulfate + diphosphate. It catalyses the reaction adenosine 5'-phosphosulfate + ATP = 3'-phosphoadenylyl sulfate + ADP + H(+). It functions in the pathway sulfur metabolism; hydrogen sulfide biosynthesis; sulfite from sulfate: step 1/3. Its pathway is sulfur metabolism; hydrogen sulfide biosynthesis; sulfite from sulfate: step 2/3. Functionally, with CysD forms the ATP sulfurylase (ATPS) that catalyzes the adenylation of sulfate producing adenosine 5'-phosphosulfate (APS) and diphosphate, the first enzymatic step in sulfur assimilation pathway. APS synthesis involves the formation of a high-energy phosphoric-sulfuric acid anhydride bond driven by GTP hydrolysis by CysN coupled to ATP hydrolysis by CysD. In terms of biological role, APS kinase catalyzes the synthesis of activated sulfate. This is Bifunctional enzyme CysN/CysC (cysNC) from Xylella fastidiosa (strain Temecula1 / ATCC 700964).